Consider the following 171-residue polypeptide: 3-hydroxyanthranilate 3,4-dioxygenase (171 aa).

Position 44 (R44) interacts with O2. Fe cation contacts are provided by H48, E54, and H92. E54 serves as a coordination point for substrate. Substrate-binding residues include R96 and E106. The a divalent metal cation site is built by C121, C126, C160, and C163.

The protein belongs to the 3-HAO family. It depends on Fe(2+) as a cofactor.

The protein localises to the cytoplasm. The enzyme catalyses 3-hydroxyanthranilate + O2 = (2Z,4Z)-2-amino-3-carboxymuconate 6-semialdehyde. It participates in cofactor biosynthesis; NAD(+) biosynthesis; quinolinate from L-kynurenine: step 3/3. Functionally, catalyzes the oxidative ring opening of 3-hydroxyanthranilate to 2-amino-3-carboxymuconate semialdehyde, which spontaneously cyclizes to quinolinate. In Yarrowia lipolytica (strain CLIB 122 / E 150) (Yeast), this protein is 3-hydroxyanthranilate 3,4-dioxygenase.